Here is an 811-residue protein sequence, read N- to C-terminus: Glycerol-3-phosphate acyltransferase (811 aa).

The HXXXXD motif motif lies at 309–314; it reads CHRSHM.

Belongs to the GPAT/DAPAT family.

The protein localises to the cell inner membrane. The enzyme catalyses sn-glycerol 3-phosphate + an acyl-CoA = a 1-acyl-sn-glycero-3-phosphate + CoA. It functions in the pathway phospholipid metabolism; CDP-diacylglycerol biosynthesis; CDP-diacylglycerol from sn-glycerol 3-phosphate: step 1/3. This is Glycerol-3-phosphate acyltransferase from Colwellia psychrerythraea (strain 34H / ATCC BAA-681) (Vibrio psychroerythus).